The primary structure comprises 29 residues: Cyclotide psyleio A (29 aa).

Residues 1–29 constitute a cross-link (cyclopeptide (Gly-Asp)); that stretch reads GLPICGETCFTGTCNTPGCSCTYPICTRD. Disulfide bonds link cysteine 5–cysteine 19, cysteine 9–cysteine 21, and cysteine 14–cysteine 26.

This is a cyclic peptide.

Its function is as follows. Probably participates in a plant defense mechanism. In Psychotria brachyceras, this protein is Cyclotide psyleio A.